A 163-amino-acid polypeptide reads, in one-letter code: Small ribosomal subunit protein bS18c (163 aa).

Disordered stretches follow at residues 1-52 (MYIS…IGPG) and 144-163 (NLRN…SSDC). Residues 7 to 48 (PFRKSKQPFRKSKQTFHKSKQPFRKFKQPFRKSKQPFRRRSR) show a composition bias toward basic residues.

The protein belongs to the bacterial ribosomal protein bS18 family. As to quaternary structure, part of the 30S ribosomal subunit.

It localises to the plastid. The protein localises to the chloroplast. The chain is Small ribosomal subunit protein bS18c from Sorghum bicolor (Sorghum).